Here is a 111-residue protein sequence, read N- to C-terminus: Large ribosomal subunit protein uL22 (111 aa).

This sequence belongs to the universal ribosomal protein uL22 family. As to quaternary structure, part of the 50S ribosomal subunit.

Functionally, this protein binds specifically to 23S rRNA; its binding is stimulated by other ribosomal proteins, e.g. L4, L17, and L20. It is important during the early stages of 50S assembly. It makes multiple contacts with different domains of the 23S rRNA in the assembled 50S subunit and ribosome. In terms of biological role, the globular domain of the protein is located near the polypeptide exit tunnel on the outside of the subunit, while an extended beta-hairpin is found that lines the wall of the exit tunnel in the center of the 70S ribosome. The polypeptide is Large ribosomal subunit protein uL22 (Wigglesworthia glossinidia brevipalpis).